Reading from the N-terminus, the 261-residue chain is Probable glutathione-independent glyoxalase hsp3103 (261 aa).

Residues cysteine 162, histidine 163, and glutamate 196 contribute to the active site.

This sequence belongs to the peptidase C56 family. HSP31-like subfamily.

It catalyses the reaction methylglyoxal + H2O = (R)-lactate + H(+). Catalyzes the conversion of methylglyoxal (MG) to D-lactate in a single glutathione (GSH)-independent step. May play a role in detoxifying endogenously produced glyoxals. Involved in protection against reactive oxygen species (ROS). This is Probable glutathione-independent glyoxalase hsp3103 from Schizosaccharomyces pombe (strain 972 / ATCC 24843) (Fission yeast).